Here is a 526-residue protein sequence, read N- to C-terminus: Glucose-6-phosphate 1-dehydrogenase (526 aa).

Residues 50–57 (GASGDLAK), Arg-84, and Lys-184 contribute to the NADP(+) site. D-glucose 6-phosphate-binding positions include Lys-184, 214-218 (HYLGK), Glu-252, and Asp-271. Catalysis depends on His-276, which acts as the Proton acceptor. Arg-370 contacts NADP(+). The D-glucose 6-phosphate site is built by Lys-373 and Arg-378. NADP(+) contacts are provided by Lys-379, Arg-383, and Arg-406. Gln-408 serves as a coordination point for D-glucose 6-phosphate. NADP(+) is bound by residues 414-416 (YFK), 434-436 (DLT), Arg-500, Tyr-516, and Trp-522.

The protein belongs to the glucose-6-phosphate dehydrogenase family.

It is found in the cytoplasm. The protein resides in the cytosol. The catalysed reaction is D-glucose 6-phosphate + NADP(+) = 6-phospho-D-glucono-1,5-lactone + NADPH + H(+). The protein operates within carbohydrate degradation; pentose phosphate pathway; D-ribulose 5-phosphate from D-glucose 6-phosphate (oxidative stage): step 1/3. Its function is as follows. Cytosolic glucose-6-phosphate dehydrogenase that catalyzes the first and rate-limiting step of the oxidative branch within the pentose phosphate pathway/shunt, an alternative route to glycolysis for the dissimilation of carbohydrates and a major source of reducing power and metabolic intermediates for fatty acid and nucleic acid biosynthetic processes. The chain is Glucose-6-phosphate 1-dehydrogenase (ZW) from Ceratitis capitata (Mediterranean fruit fly).